The chain runs to 918 residues: MASGSGSSSSTSSSALSGRLPGSRSANPRKARILGLFDAIQDAVGPPKQAAADRRTVEKTWKLMDKVVRLCQNPKLQLKNSPPYILDILPDTYQHLRLILSKYDDNQKLAQLSENEYFKIYIDSLIKKSKRAMRLFKEGKERMYEEQSQERRNLTKLSLIFSHMLAEIKAIFPSGQFQGDNFRITKADAAEFWRKFFGERTIVPWKIFRQCLHEVHQISSGLEAMALKSTIDLTCNDYISVFEFDIFTRLFQPWGSILRNWNFLAVTHPGYMAFLTYDEVKARLQKYSLKPGSYIFRLSCTRLGQWAIGYVTADGNILQTIPHNKPLFQALIDGSREGFYLYPDGRSYNPDLTGLCEPTPHDHIKVTQEQYELYCEMGSTFQLCKICAENDKDVKIEPCGHLMCTSCLTSWQESDGQGCPFCRCEIKGMEPIIVDPFDPRDESRCFSFSDSLCTPMLDFDDDDLREECLIMNRLAALRKMNERQNSPVTSPGSSPLSQRRKTPPEPLQIPHLNLPPVPPRLDLIQKGLARSPCASPTGSPKSSPCMVRKQDKPLPAPPPLLREPPPPPERPPPIPPDSRTCRHLHHADNVPCRDQSTPHEAWCTRDLSGGNPASVCRVTHDGSPKLGVPSSSVLNGRHSRMSTEAGFMRHKHHKRRESPLETLRVYNGLSGNEEYDVPPRLSPPTITIHPIVKCPVLVNSVSDKVRNSAEEDDCEYKIPSSHPVSSRLPLHCHSIKHFPRLCENGQCLSNGTHNGISEIKKLKPPDQGDVIATSTVPIHFPPARTSARENHPHGSSLTRTPSDYDLLVPHPGEESFDISPPSQPPPPPPARTCVTEHVMPTALGSRPNSDVDLFLPHSDPCPEAPLPPARRGPGEVKSNRLSQEYDQLPSCPGKGQEKASNTKGELLLPNQNLIMRPT.

A compositionally biased stretch (low complexity) spans 1–18 (MASGSGSSSSTSSSALSG). The segment at 1-27 (MASGSGSSSSTSSSALSGRLPGSRSAN) is disordered. A 4H region spans residues 46 to 178 (PPKQAAADRR…KAIFPSGQFQ (133 aa)). Residues 46-354 (PPKQAAADRR…GRSYNPDLTG (309 aa)) enclose the Cbl-PTB domain. The interval 179-251 (GDNFRITKAD…FEFDIFTRLF (73 aa)) is EF-hand-like. Aspartate 232, threonine 234, asparagine 236, tyrosine 238, and glutamate 243 together coordinate Ca(2+). The tract at residues 252 to 354 (QPWGSILRNW…GRSYNPDLTG (103 aa)) is SH2-like. Arginine 297 is a 4-O-phospho-L-tyrosine binding site. The interval 355–383 (LCEPTPHDHIKVTQEQYELYCEMGSTFQL) is linker. The segment at 384-423 (CKICAENDKDVKIEPCGHLMCTSCLTSWQESDGQGCPFCR) adopts an RING-type zinc-finger fold. 3 disordered regions span residues 481 to 582 (NERQ…RTCR), 780 to 831 (FPPA…PPAR), and 857 to 918 (HSDP…MRPT). Residues 483-497 (RQNSPVTSPGSSPLS) show a composition bias toward polar residues. Composition is skewed to pro residues over residues 554–576 (LPAPPPLLREPPPPPERPPPIPP) and 821–830 (PSQPPPPPPA). Polar residues predominate over residues 898–918 (KASNTKGELLLPNQNLIMRPT).

As to quaternary structure, interacts with several SH3 domain-containing proteins and with poly-ubiquitinated proteins.

It is found in the cytoplasm. The catalysed reaction is S-ubiquitinyl-[E2 ubiquitin-conjugating enzyme]-L-cysteine + [acceptor protein]-L-lysine = [E2 ubiquitin-conjugating enzyme]-L-cysteine + N(6)-ubiquitinyl-[acceptor protein]-L-lysine.. Its pathway is protein modification; protein ubiquitination. E3 ubiquitin-protein ligase which accepts ubiquitin from specific E2 ubiquitin-conjugating enzymes, and transfers it to substrates, generally promoting their degradation by the proteasome. This Xenopus laevis (African clawed frog) protein is E3 ubiquitin-protein ligase CBL-B-A (cblb-a).